We begin with the raw amino-acid sequence, 303 residues long: tRNA pseudouridine synthase B (303 aa).

The Nucleophile role is filled by D47.

The protein belongs to the pseudouridine synthase TruB family. Type 1 subfamily.

The enzyme catalyses uridine(55) in tRNA = pseudouridine(55) in tRNA. In terms of biological role, responsible for synthesis of pseudouridine from uracil-55 in the psi GC loop of transfer RNAs. In Roseobacter denitrificans (strain ATCC 33942 / OCh 114) (Erythrobacter sp. (strain OCh 114)), this protein is tRNA pseudouridine synthase B.